Reading from the N-terminus, the 388-residue chain is Ferrochelatase (388 aa).

2 residues coordinate Fe cation: His-196 and Glu-277.

Belongs to the ferrochelatase family.

The protein localises to the cytoplasm. It catalyses the reaction heme b + 2 H(+) = protoporphyrin IX + Fe(2+). Its pathway is porphyrin-containing compound metabolism; protoheme biosynthesis; protoheme from protoporphyrin-IX: step 1/1. Its function is as follows. Catalyzes the ferrous insertion into protoporphyrin IX. The chain is Ferrochelatase from Nostoc sp. (strain PCC 7120 / SAG 25.82 / UTEX 2576).